We begin with the raw amino-acid sequence, 468 residues long: Tapasin-related protein (468 aa).

A signal peptide spans 1–18 (MGTQEGWCLLLCLALSGA). The Lumenal segment spans residues 19 to 405 (AETKPHPAER…STQVVPPERR (387 aa)). In terms of domain architecture, Ig-like V-type spans 181 to 297 (PQGTVRTAVE…SLYRAQQIIQ (117 aa)). 2 disulfide bridges follow: cysteine 212/cysteine 283 and cysteine 321/cysteine 382. N-linked (GlcNAc...) asparagine glycosylation is present at asparagine 265. One can recognise an Ig-like C1-type domain in the interval 304-394 (PKVRLSLANE…MHISLEEPLG (91 aa)). A helical transmembrane segment spans residues 406–426 (TALGVIFASSLFLLALLFLGL). At 427 to 468 (QRRQAPTRVGLLQAERWKTTSCADTQSSHLHEDRTACVSQPS) the chain is on the cytoplasmic side.

Interacts with peptide-free HLA-A*02-B2M complexes or those loaded with low affinity peptides, likely facilitating peptide exchange onto higher affinity peptides. Interacts with MR1 in a ligand-independent way; this interaction may stabilize MR1 pool and facilitate ligand loading and dissociation.

The protein localises to the cell membrane. It localises to the endoplasmic reticulum membrane. It is found in the microsome membrane. The protein resides in the golgi apparatus membrane. Component of the antigen processing and presentation pathway, which binds to MHC class I coupled with beta2-microglobulin/B2M. Association between TAPBPR and MHC class I occurs in the absence of a functional peptide-loading complex (PLC). Expression seems to slow down and down-regulate MHC class I surface expression. This chain is Tapasin-related protein (TAPBPL), found in Pongo abelii (Sumatran orangutan).